The primary structure comprises 701 residues: Elongation factor G (701 aa).

The tr-type G domain maps to 8 to 290 (KHYRNIGISA…AVIEYLPAPI (283 aa)). GTP-binding positions include 17-24 (AHIDAGKT), 88-92 (DTPGH), and 142-145 (NKMD).

The protein belongs to the TRAFAC class translation factor GTPase superfamily. Classic translation factor GTPase family. EF-G/EF-2 subfamily.

It localises to the cytoplasm. Its function is as follows. Catalyzes the GTP-dependent ribosomal translocation step during translation elongation. During this step, the ribosome changes from the pre-translocational (PRE) to the post-translocational (POST) state as the newly formed A-site-bound peptidyl-tRNA and P-site-bound deacylated tRNA move to the P and E sites, respectively. Catalyzes the coordinated movement of the two tRNA molecules, the mRNA and conformational changes in the ribosome. The sequence is that of Elongation factor G from Hamiltonella defensa subsp. Acyrthosiphon pisum (strain 5AT).